The following is a 187-amino-acid chain: Elongation factor P (187 aa).

This sequence belongs to the elongation factor P family.

It localises to the cytoplasm. The protein operates within protein biosynthesis; polypeptide chain elongation. Involved in peptide bond synthesis. Stimulates efficient translation and peptide-bond synthesis on native or reconstituted 70S ribosomes in vitro. Probably functions indirectly by altering the affinity of the ribosome for aminoacyl-tRNA, thus increasing their reactivity as acceptors for peptidyl transferase. This chain is Elongation factor P (efp), found in Mycobacterium bovis (strain ATCC BAA-935 / AF2122/97).